A 354-amino-acid polypeptide reads, in one-letter code: Opsin-5 (354 aa).

At 1 to 33 (MALNHTALPQDERLPHYLRDGDPFASKLSWEAD) the chain is on the extracellular side. Asn-4 carries N-linked (GlcNAc...) asparagine glycosylation. A helical transmembrane segment spans residues 34-54 (LVAGFYLTIIGILSTFGNGYV). The Cytoplasmic portion of the chain corresponds to 55 to 74 (LYMSSRRKKKLRPAEIMTIN). A helical transmembrane segment spans residues 75 to 95 (LAVCDLGISVVGKPFTIISCF). Over 96-108 (CHRWVFGWIGCRW) the chain is Extracellular. A disulfide bridge links Cys-106 with Cys-183. A helical membrane pass occupies residues 109 to 129 (YGWAGFFFGCGSLITMTAVSL). The Cytoplasmic portion of the chain corresponds to 130-150 (DRYLKICYLSYGVWLKRKHAY). Residues 151 to 171 (ICLAAIWAYASFWTTMPLVGL) form a helical membrane-spanning segment. Over 172 to 197 (GDYVPEPFGTSCTLDWWLAQASVGGQ) the chain is Extracellular. A helical membrane pass occupies residues 198–218 (VFILNILFFCLLLPTAVIVFS). At 219–252 (YVKIIAKVKSSSKEVAHFDSRIHSSHVLEMKLTK) the chain is on the cytoplasmic side. Residues 253–273 (VAMLICAGFLIAWIPYAVVSV) form a helical membrane-spanning segment. The Extracellular segment spans residues 274 to 288 (WSAFGRPDSIPIQLS). Residues 289–309 (VVPTLLAKSAAMYNPIIYQVI) form a helical membrane-spanning segment. N6-(retinylidene)lysine is present on Lys-296. The Cytoplasmic segment spans residues 310 to 353 (DYKFACCQTGGLKATKKKSLEGFRLHTVTTVRKSSAVLEIHEEW). Residues Cys-315 and Cys-316 are each lipidated (S-palmitoyl cysteine).

Belongs to the G-protein coupled receptor 1 family. Opsin subfamily. It is uncertain whether Cys-315 or Cys-316 is palmitoylated. Detected in brain and retina and cell lines derived from neural retina.

It is found in the cell membrane. In terms of biological role, G-protein coupled receptor which selectively activates G(i) type G proteins via ultraviolet A (UVA) light-mediated activation in the retina. Preferentially binds the chromophore 11-cis retinal and is a bistable protein that displays emission peaks at 380 nm (UVA light) and 470 nm (blue light). Required for the light-response in the inner plexiform layer, and contributes to the regulation of the light-response in the nerve fiber layer, via phosphorylated DAT/SLC6A3 dopamine uptake. Involved in local corneal and retinal circadian rhythm photoentrainment via modulation of the UVA light-induced phase-shift of the retina clock. Acts as a circadian photoreceptor in the outer ear, via modulation of circadian clock-gene expression in response to violet light during the light-to-dark transition phase and night phase of the circadian cycle. Required in the retina to negatively regulate hyaloid vessel regression during postnatal development via light-dependent OPN5-SLC32A1-DRD2-VEGFR2 signaling. Involved in the light-dependent regulation of retina and vitreous compartment dopamine levels. This is Opsin-5 (OPN5) from Homo sapiens (Human).